Reading from the N-terminus, the 98-residue chain is MTKADFISLVAQTAGLTKKDATTATDAVISTITDVLAKGDSISFIGFGTFSTQERAAREARVPSTGKTIKVPATRVAKFKVGKNLKEAVAKASGKKKK.

This sequence belongs to the bacterial histone-like protein family. As to quaternary structure, homodimer.

In terms of biological role, histone-like DNA-binding protein which is capable of wrapping DNA to stabilize it, and thus to prevent its denaturation under extreme environmental conditions. This chain is DNA-binding protein HU (hup), found in Campylobacter jejuni subsp. jejuni serotype O:2 (strain ATCC 700819 / NCTC 11168).